We begin with the raw amino-acid sequence, 145 residues long: Large ribosomal subunit protein uL15 (145 aa).

Positions 1–42 (MELHTLKATPGSRKAKHRVGRGHAAGKGKQAGRGQSGQTKRS) are disordered. Residues 13-26 (RKAKHRVGRGHAAG) are compositionally biased toward basic residues.

It belongs to the universal ribosomal protein uL15 family. Part of the 50S ribosomal subunit.

Binds to the 23S rRNA. This chain is Large ribosomal subunit protein uL15, found in Metamycoplasma arthritidis (strain 158L3-1) (Mycoplasma arthritidis).